The following is a 334-amino-acid chain: Holliday junction branch migration complex subunit RuvB (334 aa).

Positions 1 to 182 are large ATPase domain (RuvB-L); that stretch reads MDKRMVDQEF…FGVHLRLEYY (182 aa). Residues Leu21, Arg22, Gly63, Lys66, Thr67, Thr68, 129-131, Arg172, Tyr182, and Arg219 contribute to the ATP site; that span reads EDF. Thr67 serves as a coordination point for Mg(2+). The tract at residues 183–253 is small ATPAse domain (RuvB-S); that stretch reads NENDLKEIIT…TTKRALQLLQ (71 aa). A head domain (RuvB-H) region spans residues 256–334; the sequence is QHGLDYIDHK…HFNTTNEKRE (79 aa). Arg292, Arg311, and Arg316 together coordinate DNA.

The protein belongs to the RuvB family. Homohexamer. Forms an RuvA(8)-RuvB(12)-Holliday junction (HJ) complex. HJ DNA is sandwiched between 2 RuvA tetramers; dsDNA enters through RuvA and exits via RuvB. An RuvB hexamer assembles on each DNA strand where it exits the tetramer. Each RuvB hexamer is contacted by two RuvA subunits (via domain III) on 2 adjacent RuvB subunits; this complex drives branch migration. In the full resolvosome a probable DNA-RuvA(4)-RuvB(12)-RuvC(2) complex forms which resolves the HJ.

The protein resides in the cytoplasm. It carries out the reaction ATP + H2O = ADP + phosphate + H(+). The RuvA-RuvB-RuvC complex processes Holliday junction (HJ) DNA during genetic recombination and DNA repair, while the RuvA-RuvB complex plays an important role in the rescue of blocked DNA replication forks via replication fork reversal (RFR). RuvA specifically binds to HJ cruciform DNA, conferring on it an open structure. The RuvB hexamer acts as an ATP-dependent pump, pulling dsDNA into and through the RuvAB complex. RuvB forms 2 homohexamers on either side of HJ DNA bound by 1 or 2 RuvA tetramers; 4 subunits per hexamer contact DNA at a time. Coordinated motions by a converter formed by DNA-disengaged RuvB subunits stimulates ATP hydrolysis and nucleotide exchange. Immobilization of the converter enables RuvB to convert the ATP-contained energy into a lever motion, pulling 2 nucleotides of DNA out of the RuvA tetramer per ATP hydrolyzed, thus driving DNA branch migration. The RuvB motors rotate together with the DNA substrate, which together with the progressing nucleotide cycle form the mechanistic basis for DNA recombination by continuous HJ branch migration. Branch migration allows RuvC to scan DNA until it finds its consensus sequence, where it cleaves and resolves cruciform DNA. This Staphylococcus epidermidis (strain ATCC 35984 / DSM 28319 / BCRC 17069 / CCUG 31568 / BM 3577 / RP62A) protein is Holliday junction branch migration complex subunit RuvB.